The following is a 502-amino-acid chain: T-complex protein 11-like X-linked protein 2 (502 aa).

Positions 1–36 are disordered; it reads MPKTEETVLQNDPSVAENGAPEPKTPGQSQKSKSFC.

Belongs to the TCP11 family.

This chain is T-complex protein 11-like X-linked protein 2, found in Homo sapiens (Human).